The chain runs to 478 residues: UDP-N-acetylmuramate--L-alanine ligase (478 aa).

125 to 131 (GTHGKTT) is a binding site for ATP.

The protein belongs to the MurCDEF family.

The protein resides in the cytoplasm. It carries out the reaction UDP-N-acetyl-alpha-D-muramate + L-alanine + ATP = UDP-N-acetyl-alpha-D-muramoyl-L-alanine + ADP + phosphate + H(+). It functions in the pathway cell wall biogenesis; peptidoglycan biosynthesis. Cell wall formation. This is UDP-N-acetylmuramate--L-alanine ligase from Dichelobacter nodosus (strain VCS1703A).